Reading from the N-terminus, the 230-residue chain is Large ribosomal subunit protein uL1 (230 aa).

This sequence belongs to the universal ribosomal protein uL1 family. In terms of assembly, part of the 50S ribosomal subunit.

Binds directly to 23S rRNA. The L1 stalk is quite mobile in the ribosome, and is involved in E site tRNA release. Functionally, protein L1 is also a translational repressor protein, it controls the translation of the L11 operon by binding to its mRNA. The chain is Large ribosomal subunit protein uL1 from Aster yellows witches'-broom phytoplasma (strain AYWB).